The following is a 421-amino-acid chain: Zinc finger protein Pegasus (421 aa).

The segment at glycine 35–aspartate 55 is disordered. 3 consecutive C2H2-type zinc fingers follow at residues leucine 82–histidine 104, histidine 110–histidine 132, and tyrosine 138–histidine 161. Positions serine 229–glycine 238 are enriched in polar residues. 2 disordered regions span residues serine 229 to aspartate 249 and glutamine 292 to proline 358. Residues glutamine 292–threonine 313 are compositionally biased toward low complexity. Residues histidine 339–serine 351 are compositionally biased toward polar residues. 2 C2H2-type zinc fingers span residues histidine 366–histidine 388 and phenylalanine 394–histidine 418.

The protein belongs to the Ikaros C2H2-type zinc-finger protein family. In terms of assembly, probably self-associates.

The protein localises to the nucleus. Functionally, transcriptional repressor that binds the core 5'GNNTGTNG-3' DNA consensus sequence. This is Zinc finger protein Pegasus (IKZF5) from Gallus gallus (Chicken).